A 213-amino-acid chain; its full sequence is mRNA-decapping protein OPG121 (213 aa).

The N(7)-methyl-GTP site is built by glutamate 16 and arginine 50. Positions 30–209 constitute a Nudix hydrolase domain; the sequence is KDTHVFAACI…EYLSYIYNML (180 aa). The Nudix box signature appears at 111 to 132; the sequence is GKLDKKESIKDCLRRELKEESD. 5 residues coordinate Mg(2+): glutamate 117, glutamate 126, glutamate 130, aspartate 151, and glutamate 183. Catalysis depends on glutamate 126, which acts as the Nucleophile. Aspartate 151 contacts N(7)-methyl-GTP.

Belongs to the Nudix hydrolase family. Mg(2+) is required as a cofactor. The cofactor is Mn(2+).

It carries out the reaction a 5'-end (N(7)-methyl 5'-triphosphoguanosine)-guanosine in mRNA + H2O = a 5'-end phospho-guanosine in mRNA + N(7)-methyl-GDP + 2 H(+). Its function is as follows. Decapping enzyme that remove the protective 5'-cap from both host and viral mRNAs to commit transcripts for decay by the cellular exonuclease XRN1. Accelerates viral and cellular mRNA turnover to eliminate competing host mRNAs and allow stage-specific synthesis of viral proteins. Acceleration of the turnover of cellular transcripts may even promote the shutoff of host protein synthesis. The protein is mRNA-decapping protein OPG121 (OPG121) of Homo sapiens (Human).